Reading from the N-terminus, the 112-residue chain is Large ribosomal subunit protein uL18 (112 aa).

This sequence belongs to the universal ribosomal protein uL18 family. Part of the 50S ribosomal subunit; part of the 5S rRNA/L5/L18/L25 subcomplex. Contacts the 5S and 23S rRNAs.

Its function is as follows. This is one of the proteins that bind and probably mediate the attachment of the 5S RNA into the large ribosomal subunit, where it forms part of the central protuberance. In Thermus thermophilus (strain ATCC BAA-163 / DSM 7039 / HB27), this protein is Large ribosomal subunit protein uL18.